The sequence spans 443 residues: MSSQLPILTVSQLNRQVKGFLENEIGLVHVEGEISNLSKPSSGHYYFTLKDSTAQIRCAFFKNRHSNSLLRNFNDGQQIVATGKLSLYEARGEYQLIVEEIVKAGMGILYQRFEELKIKLASEGLFNPERKKPLPRIPETIGIITSPTGAAIQDILSTLARRFPIARIIIYPSEVQGQTAPQQLVKALKLANAHKRCQVLILARGGGSIEDLWAFNDEYLARQIAISEIPVVSGIGHETDFTIADFVADYRAETPTAAATAVTPNCIELFNILDTAIYRLHDAIIRLVKGLQLKLNHLIDKIASPRQTISTYWQTLDYLERQLISAMTQFINLNINKVNIFSTQLQANNPKTQIERTKTQLRQLIMQLNQEIRIQVNQLKNQLSTNLSTLHAVSPLATLDRGYAIVSKNQRILFAAQQAQIGDTIDVRLAKGSLACEVTQIKD.

This sequence belongs to the XseA family. Heterooligomer composed of large and small subunits.

The protein localises to the cytoplasm. It catalyses the reaction Exonucleolytic cleavage in either 5'- to 3'- or 3'- to 5'-direction to yield nucleoside 5'-phosphates.. Bidirectionally degrades single-stranded DNA into large acid-insoluble oligonucleotides, which are then degraded further into small acid-soluble oligonucleotides. In Legionella pneumophila (strain Paris), this protein is Exodeoxyribonuclease 7 large subunit.